A 59-amino-acid polypeptide reads, in one-letter code: Large ribosomal subunit protein bL32 (59 aa).

The tract at residues 1–25 is disordered; sequence MAVQQNKKSPSKRGMHRAHDFLTAP.

Belongs to the bacterial ribosomal protein bL32 family.

This is Large ribosomal subunit protein bL32 from Azoarcus sp. (strain BH72).